The sequence spans 333 residues: Alpha-N-acetylgalactosaminide alpha-2,6-sialyltransferase 6 (333 aa).

Positions 1–12 (MACSRPPSQCDP) are enriched in polar residues. Residues 1–27 (MACSRPPSQCDPTTLPPGPPAGRWPLP) are disordered. Topologically, residues 1 to 43 (MACSRPPSQCDPTTLPPGPPAGRWPLPFSRRRREMSSNKEQRS) are cytoplasmic. A helical; Signal-anchor for type II membrane protein transmembrane segment spans residues 44–64 (AVFVILFALITILILYSSNSA). Topologically, residues 65–333 (NEVFHYGSLR…GITFSHPSWT (269 aa)) are lumenal. A glycan (N-linked (GlcNAc...) asparagine) is linked at Asn98. Cys108 and Cys256 are oxidised to a cystine.

This sequence belongs to the glycosyltransferase 29 family. As to expression, widely expressed, the gene expression is most abundant in colon, brain, liver, and heart.

Its subcellular location is the golgi apparatus membrane. The enzyme catalyses a ganglioside GM1b (d18:1(4E)) + CMP-N-acetyl-beta-neuraminate = a ganglioside GD1alpha (d18:1(4E)) + CMP + H(+). The catalysed reaction is a ganglioside GD1a (d18:1(4E)) + CMP-N-acetyl-beta-neuraminate = a ganglioside GT1aalpha (d18:1(4E)) + CMP + H(+). It carries out the reaction a ganglioside GT1b (d18:1(4E)) + CMP-N-acetyl-beta-neuraminate = a ganglioside GQ1balpha (d18:1(4E)) + CMP + H(+). It catalyses the reaction N-acetyl-alpha-neuraminosyl-(2-&gt;3)-beta-D-galactosyl-(1-&gt;3)-N-acetyl-beta-D-glucosaminyl-(1-&gt;3)-beta-D-galactosyl-(1-&gt;4)-beta-D-glucosyl-(1&lt;-&gt;1')-N-acyl-sphing-4-enine + CMP-N-acetyl-beta-neuraminate = N-acetyl-alpha-neuraminosyl-(2-&gt;3)-beta-D-galactosyl-(1-&gt;3)-[N-acetyl-alpha-neuraminosyl-(2-&gt;6)]-N-acetyl-beta-D-glucosaminyl-(1-&gt;3)-beta-D-galactosyl-(1-&gt;4)-beta-D-glucosyl-(1&lt;-&gt;1')-N-acyl-sphing-4-enine + CMP + H(+). The enzyme catalyses a globoside MSGG + CMP-N-acetyl-beta-neuraminate = a globoside DSGG + CMP + H(+). The catalysed reaction is 3-O-[alpha-Neu5Ac-(2-&gt;3)-beta-D-Gal-(1-&gt;3)-alpha-D-GalNAc]-L-Ser-[protein] + CMP-N-acetyl-beta-neuraminate = a 3-O-{alpha-Neu5Ac-(2-&gt;3)-beta-D-Gal-(1-&gt;3)-[alpha-Neu5Ac-(2-&gt;6)]-alpha-D-GalNAc}-L-seryl-[protein] + CMP + H(+). It carries out the reaction 3-O-[alpha-Neu5Ac-(2-&gt;3)-beta-D-Gal-(1-&gt;3)-alpha-D-GalNAc]-L-Thr-[protein] + CMP-N-acetyl-beta-neuraminate = a 3-O-{alpha-Neu5Ac-(2-&gt;3)-beta-D-Gal-(1-&gt;3)-[alpha-Neu5Ac-(2-&gt;6)]-alpha-D-GalNAc}-L-threonyl-[protein] + CMP + H(+). Transfers the sialyl group (N-acetyl-alpha-neuraminyl or NeuAc) from CMP-NeuAc onto glycolipids, forming an alpha-2,6-linkage. Produces branched type disialyl structures by transfer of a sialyl group onto the GalNAc or GlcNAc residue inside backbone core chains having a terminal sialic acid with an alpha-2,3-linkage on Gal. ST6GalNAcVI prefers glycolipids to glycoproteins, predominantly catalyzing the biosynthesis of ganglioside GD1alpha from GM1b. Also has activity toward GD1a and GT1b, and can generate DSGG (disialylgalactosylgloboside) from MSGG (monosialylgalactosylgloboside). Besides GMb1, MSGG and other glycolipids, it shows activity towards sialyl Lc4Cer generating disialyl Lc4Cer, which can lead to the synthesis of disialyl Lewis a (Le(a)), suggested to be a cancer-associated antigen. The protein is Alpha-N-acetylgalactosaminide alpha-2,6-sialyltransferase 6 (St6galnac6) of Mus musculus (Mouse).